Reading from the N-terminus, the 344-residue chain is Small ribosomal subunit protein mS38 (344 aa).

3 disordered regions span residues 1 to 27 (MIPQSVRRVVAAAPQSPVVSSLAASSA), 43 to 101 (ALQK…SVPS), and 325 to 344 (KKYKKLMRRTRNERRKQDRL). Residues 51-74 (SSKPSSPDDGSSRAFAARASVPAA) show a composition bias toward low complexity. The segment covering 325-338 (KKYKKLMRRTRNER) has biased composition (basic residues).

The protein belongs to the mitochondrion-specific ribosomal protein mS38 family. In terms of assembly, component of the mitochondrial small ribosomal subunit (mt-SSU). Mature N.crassa 74S mitochondrial ribosomes consist of a small (37S) and a large (54S) subunit. The 37S small subunit contains a 16S ribosomal RNA (16S mt-rRNA) and 32 different proteins. The 54S large subunit contains a 23S rRNA (23S mt-rRNA) and 42 different proteins.

The protein resides in the mitochondrion. Functionally, component of the mitochondrial ribosome (mitoribosome), a dedicated translation machinery responsible for the synthesis of mitochondrial genome-encoded proteins, including at least some of the essential transmembrane subunits of the mitochondrial respiratory chain. The mitoribosomes are attached to the mitochondrial inner membrane and translation products are cotranslationally integrated into the membrane. In Neurospora crassa (strain ATCC 24698 / 74-OR23-1A / CBS 708.71 / DSM 1257 / FGSC 987), this protein is Small ribosomal subunit protein mS38 (cox24).